Consider the following 302-residue polypeptide: uncharacterized protein (302 aa).

A disordered region spans residues 1–24; sequence MTEISELASSSQKPEKTKYNLPKP.

This is an uncharacterized protein from Schizosaccharomyces pombe (strain 972 / ATCC 24843) (Fission yeast).